We begin with the raw amino-acid sequence, 609 residues long: Dihydroxy-acid dehydratase (609 aa).

Mg(2+) is bound at residue Asp81. Residue Cys122 participates in [2Fe-2S] cluster binding. 2 residues coordinate Mg(2+): Asp123 and Lys124. Lys124 carries the post-translational modification N6-carboxylysine. Cys195 provides a ligand contact to [2Fe-2S] cluster. Glu491 serves as a coordination point for Mg(2+). Residue Ser517 is the Proton acceptor of the active site.

It belongs to the IlvD/Edd family. As to quaternary structure, homodimer. [2Fe-2S] cluster serves as cofactor. Mg(2+) is required as a cofactor.

It catalyses the reaction (2R)-2,3-dihydroxy-3-methylbutanoate = 3-methyl-2-oxobutanoate + H2O. The catalysed reaction is (2R,3R)-2,3-dihydroxy-3-methylpentanoate = (S)-3-methyl-2-oxopentanoate + H2O. The protein operates within amino-acid biosynthesis; L-isoleucine biosynthesis; L-isoleucine from 2-oxobutanoate: step 3/4. It functions in the pathway amino-acid biosynthesis; L-valine biosynthesis; L-valine from pyruvate: step 3/4. In terms of biological role, functions in the biosynthesis of branched-chain amino acids. Catalyzes the dehydration of (2R,3R)-2,3-dihydroxy-3-methylpentanoate (2,3-dihydroxy-3-methylvalerate) into 2-oxo-3-methylpentanoate (2-oxo-3-methylvalerate) and of (2R)-2,3-dihydroxy-3-methylbutanoate (2,3-dihydroxyisovalerate) into 2-oxo-3-methylbutanoate (2-oxoisovalerate), the penultimate precursor to L-isoleucine and L-valine, respectively. The sequence is that of Dihydroxy-acid dehydratase from Acinetobacter baumannii (strain ATCC 17978 / DSM 105126 / CIP 53.77 / LMG 1025 / NCDC KC755 / 5377).